The chain runs to 179 residues: Inosine/xanthosine triphosphatase (179 aa).

Residue Glu71 coordinates Mg(2+). Position 71 to 72 (71 to 72 (EA)) interacts with substrate.

The protein belongs to the YjjX NTPase family. As to quaternary structure, homodimer. It depends on Mg(2+) as a cofactor. Requires Mn(2+) as cofactor.

It catalyses the reaction XTP + H2O = XDP + phosphate + H(+). It carries out the reaction ITP + H2O = IDP + phosphate + H(+). In terms of biological role, phosphatase that hydrolyzes non-canonical purine nucleotides such as XTP and ITP to their respective diphosphate derivatives. Probably excludes non-canonical purines from DNA/RNA precursor pool, thus preventing their incorporation into DNA/RNA and avoiding chromosomal lesions. The chain is Inosine/xanthosine triphosphatase from Shewanella oneidensis (strain ATCC 700550 / JCM 31522 / CIP 106686 / LMG 19005 / NCIMB 14063 / MR-1).